We begin with the raw amino-acid sequence, 290 residues long: Bifunctional protein FolD 3 (290 aa).

NADP(+)-binding positions include 163–165 and Ile-229; that span reads GHS.

Belongs to the tetrahydrofolate dehydrogenase/cyclohydrolase family. As to quaternary structure, homodimer.

It catalyses the reaction (6R)-5,10-methylene-5,6,7,8-tetrahydrofolate + NADP(+) = (6R)-5,10-methenyltetrahydrofolate + NADPH. The catalysed reaction is (6R)-5,10-methenyltetrahydrofolate + H2O = (6R)-10-formyltetrahydrofolate + H(+). The protein operates within one-carbon metabolism; tetrahydrofolate interconversion. Catalyzes the oxidation of 5,10-methylenetetrahydrofolate to 5,10-methenyltetrahydrofolate and then the hydrolysis of 5,10-methenyltetrahydrofolate to 10-formyltetrahydrofolate. This chain is Bifunctional protein FolD 3, found in Roseobacter denitrificans (strain ATCC 33942 / OCh 114) (Erythrobacter sp. (strain OCh 114)).